We begin with the raw amino-acid sequence, 279 residues long: Large ribosomal subunit protein uL2 (279 aa).

The interval 223 to 279 (TVRGSAMNPNDHPHGGGEGRSPVGMDAPRTPWGKRHMGVKTRNNKKSSTSMIVRRRK) is disordered. Positions 254 to 267 (WGKRHMGVKTRNNK) are enriched in basic residues.

The protein belongs to the universal ribosomal protein uL2 family. Part of the 50S ribosomal subunit. Forms a bridge to the 30S subunit in the 70S ribosome.

Its function is as follows. One of the primary rRNA binding proteins. Required for association of the 30S and 50S subunits to form the 70S ribosome, for tRNA binding and peptide bond formation. It has been suggested to have peptidyltransferase activity; this is somewhat controversial. Makes several contacts with the 16S rRNA in the 70S ribosome. This is Large ribosomal subunit protein uL2 from Ureaplasma parvum serovar 3 (strain ATCC 27815 / 27 / NCTC 11736).